Reading from the N-terminus, the 212-residue chain is ER lumen protein-retaining receptor 1-A (212 aa).

Residues 1-4 (MNIF) lie on the Lumenal side of the membrane. The chain crosses the membrane as a helical span at residues 5–24 (RFLGDISHLSAIFILLLKIW). The Cytoplasmic segment spans residues 25–32 (KSRSCAGI). Residues 33 to 52 (SGKSQLLFAIVFTARYLDLF) traverse the membrane as a helical segment. The interaction with the K-D-E-L motif on target proteins stretch occupies residues 47–48 (RY). Residues 53–58 (TNYISF) lie on the Lumenal side of the membrane. A helical membrane pass occupies residues 59–79 (YNTSMKVVYVASSYATVWMIY). The Cytoplasmic portion of the chain corresponds to 80–92 (SKFKATYDGNHDT). Residues 93-110 (FRVEFLIVPTAILAFLVN) traverse the membrane as a helical segment. Residues 111–116 (HDFTPL) are Lumenal-facing. The chain crosses the membrane as a helical span at residues 117–135 (EIFWTFSIYLESVAILPQL). Residues 136-149 (FMVSKTGEAETITS) are Cytoplasmic-facing. The chain crosses the membrane as a helical span at residues 150–168 (HYLFALGIYRTLYLFNWIW). Residues 159 to 169 (RTLYLFNWIWR) are interaction with the K-D-E-L motif on target proteins. Topologically, residues 169–178 (RYQFEGFFDL) are lumenal. A helical transmembrane segment spans residues 179-199 (IAIVAGLVQTVLYCDFFYLYV). Residues 200 to 212 (TKVLKGKKLSLPA) are Cytoplasmic-facing. The interval 204–207 (KGKK) is important for recycling of cargo proteins with the sequence motif K-D-E-L from the Golgi to the endoplasmic reticulum.

This sequence belongs to the ERD2 family.

The protein resides in the golgi apparatus membrane. It is found in the cytoplasmic vesicle. Its subcellular location is the COPI-coated vesicle membrane. It localises to the endoplasmic reticulum membrane. The protein localises to the endoplasmic reticulum-Golgi intermediate compartment membrane. Its function is as follows. Receptor for the C-terminal sequence motif K-D-E-L that is present on endoplasmic reticulum resident proteins and that mediates their recycling from the Golgi back to the endoplasmic reticulum. The polypeptide is ER lumen protein-retaining receptor 1-A (kdelr1-a) (Xenopus laevis (African clawed frog)).